A 140-amino-acid chain; its full sequence is 5-NmdU N-acetyltransferase (140 aa).

An N-acetyltransferase domain is found at 2–140 (IVVRKALPEE…GEGLALFKEW (139 aa)).

This sequence belongs to the acetyltransferase family.

The catalysed reaction is 5-aminomethyl-dUMP in DNA + acetyl-CoA = 5-acetylaminomethyl-dUMP in DNA + CoA + H(+). Functionally, acetylates 5-aminomethyl-2'-deoxyuridine (5-NmdU) to produce 5-acetylaminomethyl-2'-deoxyuridine (5-AcNmdU) on DNA as a step in the pathway leading to thymidine hypermodifications in the viral genome. As a final result of the pathway of hypermodification, 5-acetylaminomethyl-2'-deoxyuridine (5-AcNmdU) substitutes for a subset of thymidines in the viral DNA. These modifications probably prevent degradation of viral genome by the host restriction-modification antiviral defense system. The polypeptide is 5-NmdU N-acetyltransferase (Pseudomonas aeruginosa).